The primary structure comprises 76 residues: Large ribosomal subunit protein uL29 (76 aa).

It belongs to the universal ribosomal protein uL29 family.

This chain is Large ribosomal subunit protein uL29, found in Corynebacterium diphtheriae (strain ATCC 700971 / NCTC 13129 / Biotype gravis).